Here is a 1468-residue protein sequence, read N- to C-terminus: ABC transporter G family member 34 (1468 aa).

Residues 33–53 (NGAFSRSSSSSSRRMRGEEDD) are disordered. An ABC transporter 1 domain is found at 178 to 450 (ANALGILPTR…FELMGFKCPE (273 aa)). Position 211–218 (211–218 (GPPGSGKT)) interacts with ATP. Residues 528 to 741 (ELLKANIDRE…AQNAVSVNEF (214 aa)) enclose the ABC transmembrane type-2 1 domain. 6 consecutive transmembrane segments (helical) span residues 546–566 (FVYI…MTVF), 575–595 (SVAD…MIML), 634–654 (SPMS…VIGF), 666–686 (LLML…GGAA), 690–710 (IVAN…GGFI), and 778–798 (IGFG…TLAL). The 253-residue stretch at 871-1123 (LTFEDIKYSV…ELIKYFEGIQ (253 aa)) folds into the ABC transporter 2 domain. Residue 916–923 (GVSGAGKT) participates in ATP binding. Positions 1196 to 1410 (IQCLACLWKQ…TLYGLIVSQY (215 aa)) constitute an ABC transmembrane type-2 2 domain. 7 consecutive transmembrane segments (helical) span residues 1217 to 1237 (AIRL…FWDL), 1247 to 1267 (LFNA…LNGQ), 1303 to 1323 (FPYT…MIGF), 1330 to 1350 (FFWY…YGMM), 1360 to 1380 (VASI…GFVI), 1387 to 1407 (VWWR…GLIV), and 1440 to 1460 (FVAV…GFAI).

The protein belongs to the ABC transporter superfamily. ABCG family. PDR (TC 3.A.1.205) subfamily.

The protein localises to the membrane. May be a general defense protein. This chain is ABC transporter G family member 34, found in Oryza sativa subsp. japonica (Rice).